The sequence spans 171 residues: Thioredoxin-2 (171 aa).

Residues 41-169 (AFNASPSTSQ…LQALISANHP (129 aa)) enclose the Thioredoxin domain. A disulfide bridge links cysteine 95 with cysteine 98.

Belongs to the thioredoxin family.

The protein resides in the cytoplasm. It is found in the vacuole. Its function is as follows. Thioredoxin involved in responses to oxidative and cell wall stresses. Plays an important role in appressorium formation on hyphal tips. TRX2 may affect invasive growth via the MST11-MST7-PMK1 pathway since it is required for the proper folding or dimerization of MAPKK MST7. The protein is Thioredoxin-2 of Pyricularia oryzae (strain 70-15 / ATCC MYA-4617 / FGSC 8958) (Rice blast fungus).